The sequence spans 225 residues: Triosephosphate isomerase (225 aa).

9 to 11 provides a ligand contact to substrate; the sequence is NMK. H93 serves as the catalytic Electrophile. Catalysis depends on E141, which acts as the Proton acceptor. Residues I146, G181, and 202 to 203 each bind substrate; that span reads AS.

It belongs to the triosephosphate isomerase family. As to quaternary structure, homotetramer; dimer of dimers.

The protein localises to the cytoplasm. The enzyme catalyses D-glyceraldehyde 3-phosphate = dihydroxyacetone phosphate. Its pathway is carbohydrate biosynthesis; gluconeogenesis. It functions in the pathway carbohydrate degradation; glycolysis; D-glyceraldehyde 3-phosphate from glycerone phosphate: step 1/1. Functionally, involved in the gluconeogenesis. Catalyzes stereospecifically the conversion of dihydroxyacetone phosphate (DHAP) to D-glyceraldehyde-3-phosphate (G3P). The polypeptide is Triosephosphate isomerase (Caldivirga maquilingensis (strain ATCC 700844 / DSM 13496 / JCM 10307 / IC-167)).